A 124-amino-acid polypeptide reads, in one-letter code: Holo-[acyl-carrier-protein] synthase (124 aa).

Positions 8 and 60 each coordinate Mg(2+).

The protein belongs to the P-Pant transferase superfamily. AcpS family. Requires Mg(2+) as cofactor.

The protein localises to the cytoplasm. The enzyme catalyses apo-[ACP] + CoA = holo-[ACP] + adenosine 3',5'-bisphosphate + H(+). In terms of biological role, transfers the 4'-phosphopantetheine moiety from coenzyme A to a Ser of acyl-carrier-protein. This chain is Holo-[acyl-carrier-protein] synthase, found in Wolbachia pipientis subsp. Culex pipiens (strain wPip).